The chain runs to 264 residues: MADDPFVLGDTPFSSRLIMGTGGAPSLDILERALVASGTELTTVAMRRVDAGVHGSVLSVLDRLGIRVLPNTAGCFTAGEAVLTARLAREALGTDLIKLEVIADERTLLPDPIELLDAAETLVDDGFTVLPYTNDDPVLARKLEDVGCAAVMPLGSPIGSGLGIRNPHNFQLIVEHARVPVILDAGAGTASDVALAMELGCAGVMLASAVTRAQEPVLMAEGMRHAVDAGRLAYRAGRIPRRHFAEASSPPEGRAHLDPERPAF.

The active-site Schiff-base intermediate with DXP is the Lys98. Residues Gly159, 185–186, and 207–208 contribute to the 1-deoxy-D-xylulose 5-phosphate site; these read AG and AS. The segment at 243–264 is disordered; the sequence is HFAEASSPPEGRAHLDPERPAF. A compositionally biased stretch (basic and acidic residues) spans 253–264; that stretch reads GRAHLDPERPAF.

This sequence belongs to the ThiG family. As to quaternary structure, homotetramer. Forms heterodimers with either ThiH or ThiS.

It is found in the cytoplasm. It carries out the reaction [ThiS sulfur-carrier protein]-C-terminal-Gly-aminoethanethioate + 2-iminoacetate + 1-deoxy-D-xylulose 5-phosphate = [ThiS sulfur-carrier protein]-C-terminal Gly-Gly + 2-[(2R,5Z)-2-carboxy-4-methylthiazol-5(2H)-ylidene]ethyl phosphate + 2 H2O + H(+). Its pathway is cofactor biosynthesis; thiamine diphosphate biosynthesis. In terms of biological role, catalyzes the rearrangement of 1-deoxy-D-xylulose 5-phosphate (DXP) to produce the thiazole phosphate moiety of thiamine. Sulfur is provided by the thiocarboxylate moiety of the carrier protein ThiS. In vitro, sulfur can be provided by H(2)S. This chain is Thiazole synthase, found in Streptomyces avermitilis (strain ATCC 31267 / DSM 46492 / JCM 5070 / NBRC 14893 / NCIMB 12804 / NRRL 8165 / MA-4680).